The following is a 286-amino-acid chain: MVAVIIKGNEVAEKKRAQLTEEVVKLKEQGIVPGLAVILVGEDPASRSYVKGKEKGCEQVGIYSELIELPETITEERLLAEIDRLNGDDRINGILVQLPLPKHIEEKAIIERISPEKDVDGFHPISVGRMMTGQDTFLPCTPHGIVELVKETNLDISGKHVVVIGRSNIVGKPVGQLFLNENATVTYCHSKTQNMKELSKLADILIVAVGRPKMITADYIKEGAVVIDVGVNRLETGKLCGDVDFDNVLNVAGYITPVPKGVGPMTITMLLHNTVESAKRAGVVCK.

Residues 165–167 (GRS), serine 190, and valine 231 contribute to the NADP(+) site.

Belongs to the tetrahydrofolate dehydrogenase/cyclohydrolase family. As to quaternary structure, homodimer.

The enzyme catalyses (6R)-5,10-methylene-5,6,7,8-tetrahydrofolate + NADP(+) = (6R)-5,10-methenyltetrahydrofolate + NADPH. It carries out the reaction (6R)-5,10-methenyltetrahydrofolate + H2O = (6R)-10-formyltetrahydrofolate + H(+). The protein operates within one-carbon metabolism; tetrahydrofolate interconversion. In terms of biological role, catalyzes the oxidation of 5,10-methylenetetrahydrofolate to 5,10-methenyltetrahydrofolate and then the hydrolysis of 5,10-methenyltetrahydrofolate to 10-formyltetrahydrofolate. This is Bifunctional protein FolD from Bacillus cereus (strain G9842).